A 389-amino-acid chain; its full sequence is Phospho-N-acetylmuramoyl-pentapeptide-transferase (389 aa).

The next 10 helical transmembrane spans lie at R25–I45, T73–L93, F97–Y117, F135–A155, I190–A210, G222–M242, G258–W278, V286–I306, I311–V331, and Q366–L386.

Belongs to the glycosyltransferase 4 family. MraY subfamily. Mg(2+) serves as cofactor.

It localises to the cell inner membrane. The catalysed reaction is UDP-N-acetyl-alpha-D-muramoyl-L-alanyl-gamma-D-glutamyl-meso-2,6-diaminopimeloyl-D-alanyl-D-alanine + di-trans,octa-cis-undecaprenyl phosphate = di-trans,octa-cis-undecaprenyl diphospho-N-acetyl-alpha-D-muramoyl-L-alanyl-D-glutamyl-meso-2,6-diaminopimeloyl-D-alanyl-D-alanine + UMP. The protein operates within cell wall biogenesis; peptidoglycan biosynthesis. In terms of biological role, catalyzes the initial step of the lipid cycle reactions in the biosynthesis of the cell wall peptidoglycan: transfers peptidoglycan precursor phospho-MurNAc-pentapeptide from UDP-MurNAc-pentapeptide onto the lipid carrier undecaprenyl phosphate, yielding undecaprenyl-pyrophosphoryl-MurNAc-pentapeptide, known as lipid I. The sequence is that of Phospho-N-acetylmuramoyl-pentapeptide-transferase from Burkholderia vietnamiensis (strain G4 / LMG 22486) (Burkholderia cepacia (strain R1808)).